A 99-amino-acid chain; its full sequence is Acylphosphatase-1 (99 aa).

Ala2 is modified (N-acetylalanine). The 91-residue stretch at 9–99 (SVDYEIFGKV…LDYSDFQIVK (91 aa)) folds into the Acylphosphatase-like domain. Catalysis depends on residues Arg24 and Asn42.

Belongs to the acylphosphatase family. As to expression, organ-common type isozyme is found in many different tissues.

It carries out the reaction an acyl phosphate + H2O = a carboxylate + phosphate + H(+). The polypeptide is Acylphosphatase-1 (ACYP1) (Homo sapiens (Human)).